The following is a 180-amino-acid chain: FMN reductase (NADH) RutF (180 aa).

It belongs to the non-flavoprotein flavin reductase family. RutF subfamily.

The enzyme catalyses FMNH2 + NAD(+) = FMN + NADH + 2 H(+). In terms of biological role, catalyzes the reduction of FMN to FMNH2 which is used to reduce pyrimidine by RutA via the Rut pathway. This chain is FMN reductase (NADH) RutF, found in Bradyrhizobium diazoefficiens (strain JCM 10833 / BCRC 13528 / IAM 13628 / NBRC 14792 / USDA 110).